The following is a 201-amino-acid chain: Proteasome subunit beta 1 (201 aa).

Position 1 (methionine 1) is a propeptide, removed in mature form; by autocatalysis. The Nucleophile role is filled by threonine 2.

The protein belongs to the peptidase T1B family. As to quaternary structure, the 20S proteasome core is composed of 14 alpha and 14 beta subunits that assemble into four stacked heptameric rings, resulting in a barrel-shaped structure. The two inner rings, each composed of seven catalytic beta subunits, are sandwiched by two outer rings, each composed of seven alpha subunits. The catalytic chamber with the active sites is on the inside of the barrel. Has a gated structure, the ends of the cylinder being occluded by the N-termini of the alpha-subunits. Is capped at one or both ends by the proteasome regulatory ATPase, PAN.

The protein resides in the cytoplasm. The enzyme catalyses Cleavage of peptide bonds with very broad specificity.. Its activity is regulated as follows. The formation of the proteasomal ATPase PAN-20S proteasome complex, via the docking of the C-termini of PAN into the intersubunit pockets in the alpha-rings, triggers opening of the gate for substrate entry. Interconversion between the open-gate and close-gate conformations leads to a dynamic regulation of the 20S proteasome proteolysis activity. Component of the proteasome core, a large protease complex with broad specificity involved in protein degradation. This is Proteasome subunit beta 1 from Pyrobaculum calidifontis (strain DSM 21063 / JCM 11548 / VA1).